We begin with the raw amino-acid sequence, 182 residues long: MSSSSSIWDIIIDYLSLSSIWNYLQATLLGETSVPQQTNLGPLDNLAPAVQVILGISFLILLGVGMYALWKRSVQSIQKILLFAITLYKLYKKGSDFFQALLVNPEGSDLTLQDNNIFLSLGLQEKILKKLQTVENKVKDLEGMIISQKPTTKREYSSDHYCSCSDCQSPLPTSGFTSTSEM.

2 consecutive transmembrane segments (helical) span residues 10 to 30 (IIID…TLLG) and 50 to 70 (VQVI…YALW). Positions 122–149 (GLQEKILKKLQTVENKVKDLEGMIISQK) form a coiled coil.

It is found in the membrane. The chain is Transmembrane and coiled-coil domain-containing protein 2 (TMCO2) from Bos taurus (Bovine).